The primary structure comprises 412 residues: Interferon-inducible GTPase 5 (412 aa).

The IRG-type G domain maps to 51 to 234 (TRLEVGVTGE…PMLVTTWEHD (184 aa)). GTP-binding positions include 60-67 (ESGAGKSS), 85-89 (TGVVE), and 215-217 (SNL). Residues S246 and S303 each carry the phosphoserine modification.

Belongs to the TRAFAC class dynamin-like GTPase superfamily. IRG family. As to quaternary structure, interacts with PLIN2/ADRP and COX4I1/COXIV. As to expression, expressed in spermatozoa tails from the testis and epididymis, where it may be a component of the fibrous sheath (at protein level).

The protein localises to the cell projection. Its subcellular location is the cilium. It localises to the flagellum. The protein resides in the lipid droplet. It carries out the reaction GTP + H2O = GDP + phosphate + H(+). Functionally, required for sperm motility and therefore male fertility, via positive regulation of spermatozoa fibrous sheath formation. This Mus musculus (Mouse) protein is Interferon-inducible GTPase 5.